Reading from the N-terminus, the 189-residue chain is UPF0301 protein RPR_01165 (189 aa).

The protein belongs to the UPF0301 (AlgH) family.

The sequence is that of UPF0301 protein RPR_01165 from Rickettsia peacockii (strain Rustic).